Consider the following 143-residue polypeptide: Nucleoside diphosphate kinase (143 aa).

ATP is bound by residues K11, F59, R87, T93, R104, and N114. The Pros-phosphohistidine intermediate role is filled by H117.

It belongs to the NDK family. Homotetramer. Requires Mg(2+) as cofactor.

It is found in the cytoplasm. It catalyses the reaction a 2'-deoxyribonucleoside 5'-diphosphate + ATP = a 2'-deoxyribonucleoside 5'-triphosphate + ADP. The catalysed reaction is a ribonucleoside 5'-diphosphate + ATP = a ribonucleoside 5'-triphosphate + ADP. Functionally, major role in the synthesis of nucleoside triphosphates other than ATP. The ATP gamma phosphate is transferred to the NDP beta phosphate via a ping-pong mechanism, using a phosphorylated active-site intermediate. This chain is Nucleoside diphosphate kinase, found in Erwinia tasmaniensis (strain DSM 17950 / CFBP 7177 / CIP 109463 / NCPPB 4357 / Et1/99).